A 542-amino-acid polypeptide reads, in one-letter code: uncharacterized protein (542 aa).

A run of 12 helical transmembrane segments spans residues 12–32 (LVFG…GTVL), 57–77 (FGDV…AILY), 94–114 (VIVM…SWTA), 123–143 (AAAV…AGLA), 168–188 (LFAV…AALV), 191–211 (FVVS…LVTL), 216–236 (IDAP…AFLL), 243–263 (SGVV…PTVI), 277–297 (IATF…IPGA), 313–333 (VLAL…VQAT), 358–378 (VTSW…AVPM), and 391–411 (LIIF…GTSL).

Belongs to the monovalent cation:proton antiporter 1 (CPA1) transporter (TC 2.A.36) family.

It localises to the cell membrane. This is an uncharacterized protein from Mycobacterium bovis (strain ATCC BAA-935 / AF2122/97).